Here is a 154-residue protein sequence, read N- to C-terminus: MSARCGSQARTLYELCDQCNITLPTLQIDCVFCKTVLKTAEVLAFAFRELYVVWRDDFPHAACPRCLDLHGKVNQYRNFRYAAYAPTVEEETGLTILQVRIRCCKCHKPLSPVEKTNHIVKKTQFFKLKDSWTGYCLHCWKKCMEKGQRSETLC.

Zinc fingers lie at residues 30-66 (CVFC…CPRC) and 103-139 (CCKC…CLHC).

Belongs to the papillomaviridae E6 protein family. Forms homodimers. Interacts with ubiquitin-protein ligase UBE3A/E6-AP; this interaction stimulates UBE3A ubiquitin activity. Interacts with host TP53 and EP300; this interaction inhibits TP53 activity.

Its subcellular location is the host cytoplasm. It localises to the host nucleus. Plays a major role in the induction and maintenance of cellular transformation. E6 associates with host UBE3A/E6-AP ubiquitin-protein ligase and modulates its activity. Sequesters tumor suppressor TP53 in the host cytoplasm and modulates its activity by interacting with host EP300 that results in the reduction of TP53 acetylation and activation. In turn, apoptosis induced by DNA damage is inhibited. E6 also protects host keratinocytes from apoptosis by mediating the degradation of host BAK1. May also inhibit host immune response. This chain is Protein E6, found in Homo sapiens (Human).